A 325-amino-acid chain; its full sequence is Delta(1)-pyrroline-2-carboxylate reductase (325 aa).

Belongs to the ornithine cyclodeaminase/mu-crystallin family.

It catalyses the reaction L-proline + NAD(+) = 1-pyrroline-2-carboxylate + NADH + H(+). It carries out the reaction L-proline + NADP(+) = 1-pyrroline-2-carboxylate + NADPH + H(+). Functionally, catalyzes the reduction of Delta(1)-pyrroline-2-carboxylate (Pyr2C) to L-proline, using preferentially NADPH over NADH as the electron donor. Is likely involved in a degradation pathway that converts trans-3-hydroxy-L-proline (t3LHyp) to L-proline. This is Delta(1)-pyrroline-2-carboxylate reductase from Bacillus cereus (strain ATCC 10987 / NRS 248).